The chain runs to 282 residues: Large ribosomal subunit protein uL2 (282 aa).

Disordered regions lie at residues Lys-26–Gly-55 and Pro-218–Ser-266. A compositionally biased stretch (polar residues) spans Leu-34–Arg-43. Residues Thr-254 to Ser-266 are compositionally biased toward basic residues.

This sequence belongs to the universal ribosomal protein uL2 family. As to quaternary structure, part of the 50S ribosomal subunit. Forms a bridge to the 30S subunit in the 70S ribosome.

Functionally, one of the primary rRNA binding proteins. Required for association of the 30S and 50S subunits to form the 70S ribosome, for tRNA binding and peptide bond formation. It has been suggested to have peptidyltransferase activity; this is somewhat controversial. Makes several contacts with the 16S rRNA in the 70S ribosome. This is Large ribosomal subunit protein uL2 from Pediococcus pentosaceus (strain ATCC 25745 / CCUG 21536 / LMG 10740 / 183-1w).